We begin with the raw amino-acid sequence, 395 residues long: 8-amino-7-oxononanoate synthase (395 aa).

K24 contributes to the substrate binding site. Pyridoxal 5'-phosphate is bound at residue G111 to F112. H136 serves as a coordination point for substrate. Residues S184, D209–H212, and T240–K243 each bind pyridoxal 5'-phosphate. K243 carries the N6-(pyridoxal phosphate)lysine modification. Residue T357 participates in substrate binding.

The protein belongs to the class-II pyridoxal-phosphate-dependent aminotransferase family. BioF subfamily. In terms of assembly, homodimer. It depends on pyridoxal 5'-phosphate as a cofactor.

It carries out the reaction 6-carboxyhexanoyl-[ACP] + L-alanine + H(+) = (8S)-8-amino-7-oxononanoate + holo-[ACP] + CO2. It participates in cofactor biosynthesis; biotin biosynthesis. Functionally, catalyzes the decarboxylative condensation of pimeloyl-[acyl-carrier protein] and L-alanine to produce 8-amino-7-oxononanoate (AON), [acyl-carrier protein], and carbon dioxide. In Treponema denticola (strain ATCC 35405 / DSM 14222 / CIP 103919 / JCM 8153 / KCTC 15104), this protein is 8-amino-7-oxononanoate synthase.